The chain runs to 103 residues: Histone H4 (103 aa).

Residues 1–32 (MNTQSIGAKGKSKAAKGIAKRHRKQSSLSDSI) are disordered. Residues 10–25 (GKSKAAKGIAKRHRKQ) are compositionally biased toward basic residues. The residue at position 16 (Lys16) is an N6-acetyl-N6-methyllysine; alternate. An N6-methyllysine; alternate modification is found at Lys16. Residues 20–24 (KRHRK) mediate DNA binding. The residue at position 94 (Lys94) is an N6-glutaryllysine.

This sequence belongs to the histone H4 family. As to quaternary structure, the nucleosome is a histone octamer containing two molecules each of H2A, H2B, H3 and H4 assembled in one H3-H4 heterotetramer and two H2A-H2B heterodimers. The octamer wraps approximately 147 bp of DNA. In terms of processing, glutarylation at Lys-94 (H4K91glu) destabilizes nucleosomes by promoting dissociation of the H2A-H2B dimers from nucleosomes.

The protein resides in the nucleus. It is found in the chromosome. In terms of biological role, core component of nucleosome. Nucleosomes wrap and compact DNA into chromatin, limiting DNA accessibility to the cellular machineries which require DNA as a template. Histones thereby play a central role in transcription regulation, DNA repair, DNA replication and chromosomal stability. DNA accessibility is regulated via a complex set of post-translational modifications of histones, also called histone code, and nucleosome remodeling. The protein is Histone H4 (HHF1) of Encephalitozoon cuniculi (strain GB-M1) (Microsporidian parasite).